A 785-amino-acid chain; its full sequence is Formin-like protein 3 (785 aa).

The N-terminal stretch at 1-20 is a signal peptide; sequence MGRLRLAFLAISLVVFVCVS. The disordered stretch occupies residues 96–145; that stretch reads YDWLAPASSPNEPPAETPDESSPSPSEETPSVVAPSQSVPGPPRPPPQRE. A compositionally biased stretch (low complexity) spans 115 to 134; it reads ESSPSPSEETPSVVAPSQSV. Residues 154 to 174 traverse the membrane as a helical segment; the sequence is LIIAVASTAVLTFVFVALMFL. Disordered stretches follow at residues 184-228, 241-329, and 730-785; these read AVGS…KKRS, EFST…APKT, and ETTK…SSPS. The segment covering 201 to 223 has biased composition (polar residues); it reads STGSTENSPTVASTSRKMFSVAS. Residues 256 to 303 are compositionally biased toward pro residues; it reads LKLPPGRSAPPPPPAAAPPPQPPPPPPPKPQPPPPPKIARPPPAPPKG. An FH2 domain is found at 321–747; the sequence is DSETGAPKTK…SGKKESEMTT (427 aa). A compositionally biased stretch (polar residues) spans 745-754; it reads MTTSDSNQPS. The segment covering 773 to 785 has biased composition (acidic residues); the sequence is SDDSDDEEDSSPS.

Belongs to the formin-like family. Class-I subfamily.

The protein resides in the membrane. In terms of biological role, acts as actin nucleation factor that directs the formation of actin cables and polarized growth in pollen tubes. This chain is Formin-like protein 3 (FH3), found in Arabidopsis thaliana (Mouse-ear cress).